Consider the following 258-residue polypeptide: Probable succinate transporter subunit YjjP (258 aa).

Helical transmembrane passes span 116–137 (YPRW…KLNN), 143–160 (AVVT…RQLL), 171–191 (FCIT…LPAF), 197–217 (IAMA…NAVA), and 231–251 (WAIA…AMTM).

This sequence belongs to the ThrE exporter (TC 2.A.79) family. As to quaternary structure, the transporter is composed of YjjB and YjjP.

The protein resides in the cell inner membrane. Functionally, involved in succinate export with YjjB. Both proteins are required for export. Participates in succinate export, but also in the export of other dicarboxylates, such as fumarate and malate. Contributes to succinate production under both aerobic and anaerobic conditions, and increases fumarate and malate production during anaerobic succinate production. The sequence is that of Probable succinate transporter subunit YjjP from Klebsiella aerogenes (strain ATCC 13048 / DSM 30053 / CCUG 1429 / JCM 1235 / KCTC 2190 / NBRC 13534 / NCIMB 10102 / NCTC 10006 / CDC 819-56) (Enterobacter aerogenes).